Reading from the N-terminus, the 524-residue chain is Peptidyl-prolyl isomerase cwc27 (524 aa).

A PPIase cyclophilin-type domain is found at 11–166 (TNAKVILHTT…YPPRIKRTEI (156 aa)). 3 disordered regions span residues 243–371 (SAPT…KGDD), 389–417 (KEDE…SCRD), and 451–524 (RETV…DRRR). Composition is skewed to basic and acidic residues over residues 252–308 (EELK…KKMQ) and 318–328 (AIEKLKQDIRN). The span at 329–338 (LSKTSSNTSD) shows a compositional bias: polar residues. A compositionally biased stretch (basic and acidic residues) spans 340-359 (LIPKKDKKRSLVELEREKYA). 2 stretches are compositionally biased toward basic and acidic residues: residues 461 to 477 (DPRD…YERK) and 487 to 505 (QRRD…EKRS). The segment covering 506-515 (RSDRHRRSRS) has biased composition (basic residues).

Belongs to the cyclophilin-type PPIase family. CWC27 subfamily. Associated with the spliceosome.

It is found in the cytoplasm. It localises to the nucleus. The enzyme catalyses [protein]-peptidylproline (omega=180) = [protein]-peptidylproline (omega=0). In terms of biological role, PPIases accelerate the folding of proteins. It catalyzes the cis-trans isomerization of proline imidic peptide bonds in oligopeptides. Involved in pre-mRNA splicing. This is Peptidyl-prolyl isomerase cwc27 (cwc27) from Rhizopus delemar (strain RA 99-880 / ATCC MYA-4621 / FGSC 9543 / NRRL 43880) (Mucormycosis agent).